We begin with the raw amino-acid sequence, 237 residues long: tRNA (guanine-N(7)-)-methyltransferase (237 aa).

The S-adenosyl-L-methionine site is built by glutamate 65, glutamate 90, aspartate 117, and aspartate 140. Aspartate 140 is an active-site residue. Residues lysine 144, aspartate 176, and 212-215 each bind substrate; that span reads TKFE. The interval 197-217 is disordered; it reads TCGPRQFSPRGERPETKFERR. The segment covering 206 to 217 has biased composition (basic and acidic residues); sequence RGERPETKFERR.

It belongs to the class I-like SAM-binding methyltransferase superfamily. TrmB family.

The catalysed reaction is guanosine(46) in tRNA + S-adenosyl-L-methionine = N(7)-methylguanosine(46) in tRNA + S-adenosyl-L-homocysteine. Its pathway is tRNA modification; N(7)-methylguanine-tRNA biosynthesis. In terms of biological role, catalyzes the formation of N(7)-methylguanine at position 46 (m7G46) in tRNA. In Alkalilimnicola ehrlichii (strain ATCC BAA-1101 / DSM 17681 / MLHE-1), this protein is tRNA (guanine-N(7)-)-methyltransferase.